The following is a 326-amino-acid chain: 4-hydroxythreonine-4-phosphate dehydrogenase (326 aa).

The substrate site is built by His-130 and Thr-131. His-160, His-205, and His-260 together coordinate a divalent metal cation. Residues Lys-268, Asn-277, and Arg-286 each contribute to the substrate site.

The protein belongs to the PdxA family. In terms of assembly, homodimer. Zn(2+) serves as cofactor. Mg(2+) is required as a cofactor. Requires Co(2+) as cofactor.

It localises to the cytoplasm. The catalysed reaction is 4-(phosphooxy)-L-threonine + NAD(+) = 3-amino-2-oxopropyl phosphate + CO2 + NADH. It functions in the pathway cofactor biosynthesis; pyridoxine 5'-phosphate biosynthesis; pyridoxine 5'-phosphate from D-erythrose 4-phosphate: step 4/5. Functionally, catalyzes the NAD(P)-dependent oxidation of 4-(phosphooxy)-L-threonine (HTP) into 2-amino-3-oxo-4-(phosphooxy)butyric acid which spontaneously decarboxylates to form 3-amino-2-oxopropyl phosphate (AHAP). The chain is 4-hydroxythreonine-4-phosphate dehydrogenase from Aromatoleum aromaticum (strain DSM 19018 / LMG 30748 / EbN1) (Azoarcus sp. (strain EbN1)).